The chain runs to 142 residues: Metallothiol transferase FosB (142 aa).

The VOC domain occupies 5 to 120; it reads SVNHICFSVS…DGHKIELHTG (116 aa). Mg(2+) contacts are provided by histidine 8, histidine 67, and glutamate 116. Glutamate 116 (proton donor/acceptor) is an active-site residue.

This sequence belongs to the fosfomycin resistance protein family. FosB subfamily. Homodimer. The cofactor is Mg(2+).

The protein resides in the cytoplasm. Functionally, metallothiol transferase which confers resistance to fosfomycin by catalyzing the addition of a thiol cofactor to fosfomycin. L-cysteine is probably the physiological thiol donor. The protein is Metallothiol transferase FosB of Staphylococcus epidermidis (strain ATCC 12228 / FDA PCI 1200).